A 133-amino-acid chain; its full sequence is Protein NrdI (133 aa).

Belongs to the NrdI family.

Probably involved in ribonucleotide reductase function. In Escherichia coli O17:K52:H18 (strain UMN026 / ExPEC), this protein is Protein NrdI.